Consider the following 93-residue polypeptide: Small ribosomal subunit protein uS15 (93 aa).

Belongs to the universal ribosomal protein uS15 family. As to quaternary structure, part of the 30S ribosomal subunit. Forms a bridge to the 50S subunit in the 70S ribosome, contacting the 23S rRNA.

Its function is as follows. One of the primary rRNA binding proteins, it binds directly to 16S rRNA where it helps nucleate assembly of the platform of the 30S subunit by binding and bridging several RNA helices of the 16S rRNA. Functionally, forms an intersubunit bridge (bridge B4) with the 23S rRNA of the 50S subunit in the ribosome. The protein is Small ribosomal subunit protein uS15 of Anaplasma marginale (strain St. Maries).